Here is a 317-residue protein sequence, read N- to C-terminus: Porphobilinogen deaminase (317 aa).

Cys-245 carries the S-(dipyrrolylmethanemethyl)cysteine modification.

Belongs to the HMBS family. As to quaternary structure, monomer. Dipyrromethane is required as a cofactor.

It catalyses the reaction 4 porphobilinogen + H2O = hydroxymethylbilane + 4 NH4(+). It functions in the pathway porphyrin-containing compound metabolism; protoporphyrin-IX biosynthesis; coproporphyrinogen-III from 5-aminolevulinate: step 2/4. The protein operates within porphyrin-containing compound metabolism; chlorophyll biosynthesis. Functionally, tetrapolymerization of the monopyrrole PBG into the hydroxymethylbilane pre-uroporphyrinogen in several discrete steps. The sequence is that of Porphobilinogen deaminase from Synechococcus sp. (strain RCC307).